Consider the following 628-residue polypeptide: Dihydroxy-acid dehydratase (628 aa).

Mg(2+) is bound at residue Asp-80. [2Fe-2S] cluster is bound at residue Cys-121. Positions 122 and 123 each coordinate Mg(2+). At Lys-123 the chain carries N6-carboxylysine. Cys-207 is a binding site for [2Fe-2S] cluster. Glu-503 is a Mg(2+) binding site. Catalysis depends on Ser-529, which acts as the Proton acceptor.

The protein belongs to the IlvD/Edd family. In terms of assembly, homodimer. [2Fe-2S] cluster is required as a cofactor. Mg(2+) serves as cofactor.

It carries out the reaction (2R)-2,3-dihydroxy-3-methylbutanoate = 3-methyl-2-oxobutanoate + H2O. It catalyses the reaction (2R,3R)-2,3-dihydroxy-3-methylpentanoate = (S)-3-methyl-2-oxopentanoate + H2O. Its pathway is amino-acid biosynthesis; L-isoleucine biosynthesis; L-isoleucine from 2-oxobutanoate: step 3/4. It participates in amino-acid biosynthesis; L-valine biosynthesis; L-valine from pyruvate: step 3/4. Functions in the biosynthesis of branched-chain amino acids. Catalyzes the dehydration of (2R,3R)-2,3-dihydroxy-3-methylpentanoate (2,3-dihydroxy-3-methylvalerate) into 2-oxo-3-methylpentanoate (2-oxo-3-methylvalerate) and of (2R)-2,3-dihydroxy-3-methylbutanoate (2,3-dihydroxyisovalerate) into 2-oxo-3-methylbutanoate (2-oxoisovalerate), the penultimate precursor to L-isoleucine and L-valine, respectively. In Psychrobacter arcticus (strain DSM 17307 / VKM B-2377 / 273-4), this protein is Dihydroxy-acid dehydratase.